The sequence spans 1117 residues: RNA-directed RNA polymerase (1117 aa).

Residues 1–17 (MTVSGRSSWQNGKTTNA) are compositionally biased toward polar residues. The interval 1–23 (MTVSGRSSWQNGKTTNAMRAGKL) is disordered.

It catalyses the reaction RNA(n) + a ribonucleoside 5'-triphosphate = RNA(n+1) + diphosphate. Its function is as follows. RNA-dependent RNA polymerase which replicates the viral genome. This Penicillium chrysogenum (Penicillium notatum) protein is RNA-directed RNA polymerase (p1).